Reading from the N-terminus, the 190-residue chain is Protein GrpE (190 aa).

Positions 1 to 11 (MSNQDEPQNSP) are enriched in polar residues. A disordered region spans residues 1-36 (MSNQDEPQNSPEEFAEDQQADVALEEASSDSSETAA). Acidic residues predominate over residues 13-28 (EFAEDQQADVALEEAS).

It belongs to the GrpE family. As to quaternary structure, homodimer.

It is found in the cytoplasm. Participates actively in the response to hyperosmotic and heat shock by preventing the aggregation of stress-denatured proteins, in association with DnaK and GrpE. It is the nucleotide exchange factor for DnaK and may function as a thermosensor. Unfolded proteins bind initially to DnaJ; upon interaction with the DnaJ-bound protein, DnaK hydrolyzes its bound ATP, resulting in the formation of a stable complex. GrpE releases ADP from DnaK; ATP binding to DnaK triggers the release of the substrate protein, thus completing the reaction cycle. Several rounds of ATP-dependent interactions between DnaJ, DnaK and GrpE are required for fully efficient folding. The sequence is that of Protein GrpE from Teredinibacter turnerae (strain ATCC 39867 / T7901).